An 85-amino-acid polypeptide reads, in one-letter code: Inhibitor of dGTPase (85 aa).

As to quaternary structure, interacts with host dGTPase/dgt.

In terms of biological role, plays a role in increasing the intracellular pool of dGTP. Interacts with and inhibits host dGTPase/dgt. The complex made of the host dGTPase and gene 1.2 protein creates a GTP-binding site of high affinity. Subsequent binding of GTP to the enzyme-inhibitor complex inhibits its dissociation. The polypeptide is Inhibitor of dGTPase (Escherichia coli (Bacteriophage T7)).